We begin with the raw amino-acid sequence, 194 residues long: MSLISRLRAVVAGDDYLDSDYDDLDYDTDDHMDADHRSDHASGGALATPSDSSPFDLGGGFSGSNVIGMPGVGSTSAEVNLMEPRSFDEMPRAIQALRERKTVILNLTMMEPDQAQRAVDFVAGGTFAIDGHQERVGESIFLFAPSCVTVSNTSYDEASAPSMVSQDHDSVPSSSQQTGAAPVPAWEATSAGGL.

2 disordered regions span residues Asp-35–Pro-54 and Ser-159–Leu-194.

The protein belongs to the SepF family. Homodimer. Interacts with FtsZ.

It localises to the cytoplasm. Functionally, cell division protein that is part of the divisome complex and is recruited early to the Z-ring. Probably stimulates Z-ring formation, perhaps through the cross-linking of FtsZ protofilaments. Its function overlaps with FtsA. The chain is Cell division protein SepF from Prochlorococcus marinus (strain MIT 9313).